The primary structure comprises 369 residues: MDSVSLSEVTVIKGTTHLGFMHSFRQPFCGVKISPKFYLSKVDGPKAISSSSNTKSQFVYGGGSIAATSDSGYKMNGVNLKSRTLMSSAVKERSLLDAYDDEYGGVIVDHGKLPSNPYAFASMLRASLSDWRRKGKKGVWLKLPVEQSELVPIAIKEGFEYHHAEKGYVMLTYWIPEEEPSMLPANASHQVGVGGFVLNQHKEVLVVQEKYCAPSITGLWKLPTGFINESEEIFSGAVREVKEETGVDTEFSEVIAFRHAHNVAFEKSDLFFICMLRPLSDKIIIDALEIKAAKWMPLAEFVEQPMIRGDKMFKRVIEICEARLSHRYCGLSPHRLVSTFDGKPSSLYYNVVDDDHDPSHSNCSTEFYR.

The Nudix hydrolase domain occupies S188–E318. The Nudix box motif lies at G225–G246. Mg(2+)-binding residues include E240 and E244.

The protein belongs to the Nudix hydrolase family. The cofactor is Mg(2+). Mn(2+) is required as a cofactor. As to expression, expressed in roots, stems and, at lower level, leaves.

Its function is as follows. Probably mediates the hydrolysis of some nucleoside diphosphate derivatives. May be involved in plant immunity and act as a positive regulator of defense response through salicylic acid (SA) signaling. This Arabidopsis thaliana (Mouse-ear cress) protein is Nudix hydrolase 8 (NUDT8).